Consider the following 70-residue polypeptide: Large ribosomal subunit protein uL29 (70 aa).

Belongs to the universal ribosomal protein uL29 family.

This chain is Large ribosomal subunit protein uL29, found in Clostridium botulinum (strain Eklund 17B / Type B).